The following is an 845-amino-acid chain: MFGLSKMLRVGEGRAVKRLQKIADQVIALEDQYANLTDEELKAKTEEFKDRLAQGETLDDIFLDAFATAREASWRVLGQKHYKVQIMGGAALHFGNVAEMRTGEGKTLTCVLPAYLNALEGKGVHVVTVNDYLAKRDAEWMGRVHRWLGLSVGVILSELRPAERKVAYDCDITYGTNNELGFDYLRDNMARSLNDLVQRGHHYAIVDEVDSILIDEARTPLIISGPVDGSSQWYNVFAQIVPQLTRDIHYEVDHRKKTVGIKEEGVEKVEDLLGIENLYAPEHSQLVSYLNNAIKAEELFERDKDYIVRNGEVMIVDGFTGRVLAGRRYNEGMHQAIEAKEKVEIKNENQTLATVTLQNYFRLYEKLSGMTGTAETEAAELHQIYKLDVIQIPTNRENQRDDLTDLVYKTQEAKFAAVVDDIAERIANGQPVLVGTVSVERSEYLSQLLTRRGIKHNVLNAKHHEQEAQIVAQAGLPGAVTVATNMAGRGTDIVLGGNPDILLDIKLRERGLDPFEDEEAYQVAWEEELPKMKQRCEERAEKVREAGGLYVLGTERHESRRIDNQLRGRAGRQGDPGATRFYLSMRDDLMVRFVGPTMENMMNRLNVPDDVPIESKTVTNSIKGAQAQVENQNFEMRKNVLKYDEVMNEQRKVIYSERREILESSDISHYIKNMVDETISAYVAAATANGYVEDWDLDKLWNALEALYGPTFTWQSLVDGSEYGAPGELSAEDLRTALLEDARAEYAKLEEAVTALGGEAQMRNIERMVLMPVIDQKWREHLYEMDYLKEGIGLRAMAQRDPLVEYQKEGGDMFNAMKEAIKEETVRQLFLMRKQFVKQDEEANA.

ATP is bound by residues Gln85, 103–107 (GEGKT), and Asp492.

It belongs to the SecA family. In terms of assembly, monomer and homodimer. Part of the essential Sec protein translocation apparatus which comprises SecA, SecYEG and auxiliary proteins SecDF. Other proteins may also be involved.

Its subcellular location is the cell membrane. The protein localises to the cytoplasm. The enzyme catalyses ATP + H2O + cellular proteinSide 1 = ADP + phosphate + cellular proteinSide 2.. Part of the Sec protein translocase complex. Interacts with the SecYEG preprotein conducting channel. Has a central role in coupling the hydrolysis of ATP to the transfer of proteins into and across the cell membrane, serving as an ATP-driven molecular motor driving the stepwise translocation of polypeptide chains across the membrane. The protein is Protein translocase subunit SecA 1 of Corynebacterium efficiens (strain DSM 44549 / YS-314 / AJ 12310 / JCM 11189 / NBRC 100395).